Here is a 407-residue protein sequence, read N- to C-terminus: Aurora kinase A-A (407 aa).

Over residues 1–10 (MERAVKENHK) the composition is skewed to basic and acidic residues. The segment at 1–130 (MERAVKENHK…KTSAVPKEEG (130 aa)) is disordered. Composition is skewed to polar residues over residues 67-77 (ILSSQKPTTQI) and 84-110 (QGHQ…STPN). The region spanning 140–390 (FEIGRPLGKG…LKGVLEHPWI (251 aa)) is the Protein kinase domain. Residues K150, K169, and 217–220 (LDYA) each bind ATP. Catalysis depends on D263, which acts as the Proton acceptor. D281 is a binding site for ATP. Residues 287–300 (HAPSSRRTTLCGTL) form an activation segment region.

The protein belongs to the protein kinase superfamily. Ser/Thr protein kinase family. Aurora subfamily. As to quaternary structure, interacts with kif2c and kif11. Post-translationally, phosphorylated. Autophosphorylated on a serine residue. Highly expressed in ovary and testis.

The protein resides in the cytoplasm. The protein localises to the cytoskeleton. It is found in the spindle. Its subcellular location is the microtubule organizing center. It localises to the centrosome. The catalysed reaction is L-seryl-[protein] + ATP = O-phospho-L-seryl-[protein] + ADP + H(+). It catalyses the reaction L-threonyl-[protein] + ATP = O-phospho-L-threonyl-[protein] + ADP + H(+). In terms of biological role, mitotic serine/threonine kinases that contributes to the regulation of cell cycle progression. Associates with the centrosome and the spindle microtubules during mitosis and plays a critical role in various mitotic events including the establishment of mitotic spindle, centrosome duplication, centrosome separation as well as maturation, chromosomal alignment, spindle assembly checkpoint, and cytokinesis. Phosphorylates numerous target proteins. Important for microtubule formation and/or stabilization. This is Aurora kinase A-A (aurka-a) from Xenopus laevis (African clawed frog).